We begin with the raw amino-acid sequence, 489 residues long: Homoserine O-acetyltransferase (489 aa).

The region spanning 47-354 (NAILVCHALT…NYGHDSFLLE (308 aa)) is the AB hydrolase-1 domain. The active-site Nucleophile is the Ser-152. Arg-221 is a substrate binding site. Active-site residues include Asp-315 and His-348. A substrate-binding site is contributed by Asp-349. 2 CBS domains span residues 375-434 (MIED…NLEE) and 436-489 (MTKN…IEEF).

Belongs to the AB hydrolase superfamily. MetX family. Homodimer.

Its subcellular location is the cytoplasm. The catalysed reaction is L-homoserine + acetyl-CoA = O-acetyl-L-homoserine + CoA. The protein operates within amino-acid biosynthesis; L-methionine biosynthesis via de novo pathway; O-acetyl-L-homoserine from L-homoserine: step 1/1. Functionally, transfers an acetyl group from acetyl-CoA to L-homoserine, forming acetyl-L-homoserine. The chain is Homoserine O-acetyltransferase from Methanohalobium evestigatum (strain ATCC BAA-1072 / DSM 3721 / NBRC 107634 / OCM 161 / Z-7303).